Reading from the N-terminus, the 91-residue chain is Small ribosomal subunit protein uS19 (91 aa).

This sequence belongs to the universal ribosomal protein uS19 family.

Protein S19 forms a complex with S13 that binds strongly to the 16S ribosomal RNA. The protein is Small ribosomal subunit protein uS19 of Metamycoplasma arthritidis (strain 158L3-1) (Mycoplasma arthritidis).